The following is a 288-amino-acid chain: Large ribosomal subunit protein uL2 (288 aa).

2 disordered regions span residues 1–46 (MAIH…RNVY) and 226–288 (MVMN…RGKK). Over residues 235 to 248 (NGGGQGKSKGGGGR) the composition is skewed to gly residues. Basic residues predominate over residues 279 to 288 (HNGRKPRGKK).

The protein belongs to the universal ribosomal protein uL2 family. As to quaternary structure, part of the 50S ribosomal subunit. Forms a bridge to the 30S subunit in the 70S ribosome.

In terms of biological role, one of the primary rRNA binding proteins. Required for association of the 30S and 50S subunits to form the 70S ribosome, for tRNA binding and peptide bond formation. It has been suggested to have peptidyltransferase activity; this is somewhat controversial. Makes several contacts with the 16S rRNA in the 70S ribosome. The chain is Large ribosomal subunit protein uL2 from Opitutus terrae (strain DSM 11246 / JCM 15787 / PB90-1).